Reading from the N-terminus, the 258-residue chain is MAVTQGIDAHTINQQHRIVIRNFSSFVSLIFTFFACYTFSEHDFKEDLFFRFIVLLPSFSYLILQYLIFFHTTWKGYCKTESTLRNILHSTLIVLLLAFVIINIFSSITFVTDKWNSEDLFFYSIILPSFFIPPTYLLSTSCDFITTSFTATGINILVDLMILLSYLTFLLLLLFLEKAEYRPYFILASFVLILVKSLKEIYLPSRESSSPAASWRVIIFALVFTLAVITHSLSAYVSISTLARYFRLSATGEVLSIS.

This sequence belongs to the UPF0328 family.

This is UPF0328 protein ECU02_0090 from Encephalitozoon cuniculi (strain GB-M1) (Microsporidian parasite).